The primary structure comprises 183 residues: Protein jagunal homolog 1-B (183 aa).

Over 1–39 (MASRAGPRATGTDGSDYQHRERVASHYQMSVALKSEIKK) the chain is Cytoplasmic. The helical transmembrane segment at 40-60 (LNIAHAVVWFLVAAQVLVSQL) threads the bilayer. Over 61–71 (NLVSHKVVASP) the chain is Lumenal. The helical transmembrane segment at 72-92 (YQWEYTYLLSIIPTVFSFMAL) threads the bilayer. Topologically, residues 93–99 (PKNNISY) are cytoplasmic. A helical transmembrane segment spans residues 100-120 (LVISMISGGLFCIGPILYGGM). The Lumenal portion of the chain corresponds to 121–137 (EMFPVAQQLYRHGKAYR). Residues 138–158 (FIFGFSAVSIMYLVLIISVQV) traverse the membrane as a helical segment. Residues 159 to 183 (HGWQIYYSKKLLDAWFTNTQDKKKK) are Cytoplasmic-facing.

Belongs to the jagunal family.

The protein localises to the endoplasmic reticulum membrane. Functionally, endoplasmic reticulum transmembrane protein involved in vesicle-mediated transport, which is required for neutrophil function. The chain is Protein jagunal homolog 1-B (jagn1b) from Danio rerio (Zebrafish).